A 100-amino-acid chain; its full sequence is MLEHALISGAYLFSIGIYGLITSRNMVRALMCLELILNAVNVNLVTFSNYFDSRQVKGDIFSIFVTAIAAAEAAIGLAIALAIYRNRKSTRIDQFNLSKW.

3 helical membrane passes run 1-21, 29-49, and 63-83; these read MLEHALISGAYLFSIGIYGLI, ALMCLELILNAVNVNLVTFSN, and IFVTAIAAAEAAIGLAIALAI.

Belongs to the complex I subunit 4L family. In terms of assembly, NDH is composed of at least 16 different subunits, 5 of which are encoded in the nucleus.

The protein localises to the plastid. It localises to the chloroplast thylakoid membrane. It catalyses the reaction a plastoquinone + NADH + (n+1) H(+)(in) = a plastoquinol + NAD(+) + n H(+)(out). It carries out the reaction a plastoquinone + NADPH + (n+1) H(+)(in) = a plastoquinol + NADP(+) + n H(+)(out). In terms of biological role, NDH shuttles electrons from NAD(P)H:plastoquinone, via FMN and iron-sulfur (Fe-S) centers, to quinones in the photosynthetic chain and possibly in a chloroplast respiratory chain. The immediate electron acceptor for the enzyme in this species is believed to be plastoquinone. Couples the redox reaction to proton translocation, and thus conserves the redox energy in a proton gradient. This Cycas taitungensis (Prince sago) protein is NAD(P)H-quinone oxidoreductase subunit 4L, chloroplastic.